The following is an 85-amino-acid chain: U4-theraphotoxin-Hhn1z (85 aa).

The N-terminal stretch at 1 to 22 (MKMTLIAILTCAAVLVLHTTAA) is a signal peptide. A propeptide spanning residues 23–48 (EELEAESQLMEVGMPDTELEAVDEER) is cleaved from the precursor. Intrachain disulfides connect Cys52–Cys66, Cys56–Cys77, and Cys71–Cys82.

The protein belongs to the neurotoxin 12 (Hwtx-2) family. 02 (Hwtx-2) subfamily. Expressed by the venom gland.

The protein localises to the secreted. Postsynaptic neurotoxin. The protein is U4-theraphotoxin-Hhn1z of Cyriopagopus hainanus (Chinese bird spider).